A 341-amino-acid polypeptide reads, in one-letter code: Hyaluronidase A (341 aa).

N-linked (GlcNAc...) asparagine glycans are attached at residues N3, N68, and N83. 2 disulfide bridges follow: C23–C311 and C189–C201.

It belongs to the glycosyl hydrolase 56 family. As to expression, expressed by the venom gland.

The protein resides in the secreted. The catalysed reaction is Random hydrolysis of (1-&gt;4)-linkages between N-acetyl-beta-D-glucosamine and D-glucuronate residues in hyaluronate.. In terms of biological role, may hydrolyze high molecular weight hyaluronic acid to produce small oligosaccharides. In Vespa velutina (Asian yellow-legged hornet), this protein is Hyaluronidase A.